We begin with the raw amino-acid sequence, 1189 residues long: Magnesium-chelatase subunit H (1189 aa).

Belongs to the Mg-chelatase subunit H family.

It catalyses the reaction protoporphyrin IX + Mg(2+) + ATP + H2O = Mg-protoporphyrin IX + ADP + phosphate + 3 H(+). It functions in the pathway porphyrin-containing compound metabolism; bacteriochlorophyll biosynthesis (light-independent). Functionally, involved in bacteriochlorophyll pigment biosynthesis; introduces a magnesium ion into protoporphyrin IX to yield Mg-protoroporphyrin IX. This is Magnesium-chelatase subunit H (bchH) from Rhodobacter capsulatus (strain ATCC BAA-309 / NBRC 16581 / SB1003).